Here is a 746-residue protein sequence, read N- to C-terminus: Ribosome biogenesis protein BOP1 (746 aa).

A disordered region spans residues 1–116 (MAGSRGAGRT…PCPRTEMASA (116 aa)). Residues 43–65 (SHSTGSDSGVSDSEESVFSGLED) are compositionally biased toward low complexity. The segment covering 66 to 87 (SGSDSSEDDDEGDEEGEDGALD) has biased composition (acidic residues). Residues 88-99 (DEGHSGIKKTTE) show a composition bias toward basic and acidic residues. Residue Thr106 is modified to Phosphothreonine. Tyr122 carries the phosphotyrosine modification. Phosphoserine is present on residues Ser126 and Ser127. Positions 265 to 427 (MGWIQPRRPR…CLSVSPGGQW (163 aa)) are sufficient for nucleolar localization. WD repeat units follow at residues 411–450 (GHSD…CVRT), 452–492 (PVGG…RLVA), 532–576 (CHGK…SPFR), 577–615 (RSHG…LTKK), 618–657 (PNCK…KPYR), 661–700 (HHKK…DLLQ), and 716–746 (TRDL…RLFT).

This sequence belongs to the WD repeat BOP1/ERB1 family. In terms of assembly, component of the PeBoW complex, composed of BOP1, PES1 and WDR12. The complex is held together by BOP1, which interacts with PES1 via its N-terminal domain and with WDR12 via a high-affinity interaction between the seven-bladed beta-propeller domains of the 2 proteins. The NOP7 complex associates with the 66S pre-ribosome. The PeBoW complex associates with DDX27, BOP1 interacts directly with DDX27.

It localises to the nucleus. The protein resides in the nucleolus. Its subcellular location is the nucleoplasm. Component of the PeBoW complex, which is required for maturation of 28S and 5.8S ribosomal RNAs and formation of the 60S ribosome. In Homo sapiens (Human), this protein is Ribosome biogenesis protein BOP1.